Consider the following 288-residue polypeptide: MKLAVYGKGGIGKSTTSCNISVALAKRGKKVLQIGCDPKHDSTFTLTGFLIPTIIDTLQEKDYHYEDVWPEDVIYKGYGGVDCVEAGGPPAGAGCGGYVVGETVKLLKELNAFDEYDVILFDVLGDVVCGGFAAPLNYADYCLIVTDNGFDALFAANRIAASVREKARTHPLRLAGLIGNRTSKRDLIEKYIEAVPMPVLEVLPLIEDIRVSRVKGKTLFEMAEQDPSLDYVCDYYLNIADQILARPEGVVPNDTPDRELFSLLSDFYLNPGKPQVPNSEEELDLMIV.

Residues 10-15 and Lys-39 contribute to the ATP site; that span reads GIGKST. Mg(2+) is bound at residue Ser-14. Positions 95 and 129 each coordinate [4Fe-4S] cluster. 180-181 lines the ATP pocket; the sequence is NR.

It belongs to the NifH/BchL/ChlL family. As to quaternary structure, homodimer. Protochlorophyllide reductase is composed of three subunits; ChlL, ChlN and ChlB. [4Fe-4S] cluster is required as a cofactor.

The enzyme catalyses chlorophyllide a + oxidized 2[4Fe-4S]-[ferredoxin] + 2 ADP + 2 phosphate = protochlorophyllide a + reduced 2[4Fe-4S]-[ferredoxin] + 2 ATP + 2 H2O. It participates in porphyrin-containing compound metabolism; chlorophyll biosynthesis (light-independent). In terms of biological role, component of the dark-operative protochlorophyllide reductase (DPOR) that uses Mg-ATP and reduced ferredoxin to reduce ring D of protochlorophyllide (Pchlide) to form chlorophyllide a (Chlide). This reaction is light-independent. The L component serves as a unique electron donor to the NB-component of the complex, and binds Mg-ATP. This Nostoc punctiforme (strain ATCC 29133 / PCC 73102) protein is Light-independent protochlorophyllide reductase iron-sulfur ATP-binding protein.